A 276-amino-acid polypeptide reads, in one-letter code: U6 snRNA phosphodiesterase 1 (276 aa).

A disordered region spans residues 1-58; it reads MIVNYSSSSSEEESGSSSSPSGKRQKLDTETSEALDHGSAQRKVCKSSHLTPRLPLPE. His-131 acts as the Proton acceptor in catalysis. AMP-binding positions include 131–133, Tyr-213, and 215–221; these read HLS and DPSFHIS. UMP is bound by residues Tyr-213 and 217–221; that span reads SFHIS. His-219 serves as the catalytic Proton donor.

Belongs to the 2H phosphoesterase superfamily. USB1 family.

It is found in the nucleus. The catalysed reaction is a 3'-end uridylyl-uridine-RNA = a 3'-end 2',3'-cyclophospho-uridine-RNA + uridine. The enzyme catalyses a 3'-end uridylyl-adenosine-RNA = a 3'-end 2',3'-cyclophospho-uridine-RNA + adenosine. Its function is as follows. 3'-5' RNA exonuclease that trims the 3' end of oligo(U) and oligo(A) tracts of the pre-U6 small nuclear RNA (snRNA) molecule, leading to the formation of a mature U6 snRNA 3' end-terminated with a 2',3'-cyclic phosphate. Participates in the U6 snRNA 3' end processing that prevents U6 snRNA degradation. In addition also removes uridines from the 3' end of U6atac snRNA and possibly the vault RNA VTRNA1-1. This chain is U6 snRNA phosphodiesterase 1, found in Danio rerio (Zebrafish).